Consider the following 479-residue polypeptide: MILETTAKASQQYKVMPIMISLLLAGFIGMFSETALNIALTDLMKELNITAATVQWLTTGYLLVLGILVPVSGLLLQWFTTRQLFTVSLIFSILGTFIAALAPSFSFLLAARIVQALGTGLLLPLMFNTILVIFPPHKRGAAMGTIGLVIMFAPAIGPTFSGLVLEHLNWHWIFWISLPFLVLALVFGIAYMQNVSETTKPKIDVLSIILSTIGFGGIVFGFSNAGEGSGGWSSPTVIVSLIVGVVGLILFSIRQLTMKQPMMNLRAFKYPMFILGVIMVFICMMVILSSMLLLPMYLQGGLVLTAFASGLVLLPGGILNGFMSPVTGRLFDKYGPKWLVIPGFVIVTVVLWFFSNVTTTSTAVLIIILHTCLMIGISMIMMPAQTNGLNQLPREFYPDGTAIMNTLQQMAGAIGTAVAVSIMAAGQHDYMSTVKNPADPAVIPQALTAGVQHAFVFAMIVAIIGLIGAFFMKRVKVDH.

The next 14 membrane-spanning stretches (helical) occupy residues 19–41 (MISLLLAGFIGMFSETALNIALT), 56–78 (WLTTGYLLVLGILVPVSGLLLQW), 85–107 (FTVSLIFSILGTFIAALAPSFSF), 112–134 (RIVQALGTGLLLPLMFNTILVIF), 141–160 (AAMGTIGLVIMFAPAIGPTF), 170–192 (WHWIFWISLPFLVLALVFGIAYM), 205–222 (VLSIILSTIGFGGIVFGF), 232–251 (WSSPTVIVSLIVGVVGLILF), 272–294 (MFILGVIMVFICMMVILSSMLLL), 304–326 (LTAFASGLVLLPGGILNGFMSPV), 338–355 (WLVIPGFVIVTVVLWFFS), 360–382 (TSTAVLIIILHTCLMIGISMIMM), 403–425 (IMNTLQQMAGAIGTAVAVSIMAA), and 449–471 (AGVQHAFVFAMIVAIIGLIGAFF).

The protein belongs to the major facilitator superfamily. EmrB family.

It is found in the cell membrane. Its function is as follows. Proton-dependent transporter. May mediate the efflux of lincomycin. The chain is Lincomycin resistance protein LmrB (lmrB) from Bacillus subtilis (strain 168).